The primary structure comprises 305 residues: MSTQYSILFKQEHAHEDAIWSVGWGKNSNDGSELVISGSLDDLVKVWKWSDERLEMQWALEGHQLGVVSVDVSPSGNIMASSSLDAHIRLWDLESGKQIRSIDAGPVDAWSVAFSPDSQHLATGSHVGKVNIFGVETGKKEYSLDTRGKFILSIAYSPDGKYLASGAIDGIINIFDIATGKLLHTLEGHAMPIRSLTFSTDSQLLVTASDDGYIKIYDVQHASLAATLSGHGSWVLNVAFSPDDAHFVSSSSDKSVKVWDVSARTCVHTFLDHQDQVWGVKYNRNGSKIVSVGDDQEIHVYDCPI.

7 WD repeats span residues 14-57, 62-101, 104-143, 146-187, 188-227, 230-269, and 272-305; these read AHED…LEMQ, GHQL…QIRS, AGPV…KEYS, TRGK…HTLE, GHAM…LAAT, GHGS…CVHT, and DHQD…DCPI.

Belongs to the SKI8 family. In terms of assembly, component of the PAF1 complex. Component of the SKI complex.

It is found in the nucleus. It localises to the cytoplasm. In terms of biological role, component of the PAF1 complex (PAF1C) which has multiple functions during transcription by RNA polymerase II and is implicated in regulation of development and maintenance of embryonic stem cell pluripotency. PAF1C associates with RNA polymerase II through interaction with POLR2A CTD non-phosphorylated and 'Ser-2'- and 'Ser-5'-phosphorylated forms and is involved in transcriptional elongation, acting both independently and synergistically with TCEA1 and in cooperation with the DSIF complex and HTATSF1. Also acts as a component of the SKI complex, a multiprotein complex that assists the RNA-degrading exosome during the mRNA decay and quality-control pathways. The SKI complex catalyzes mRNA extraction from 80S ribosomal complexes in the 3'-5' direction and channels mRNA to the cytosolic exosome for degradation. The protein is Superkiller complex protein 8 (skic8) of Xenopus laevis (African clawed frog).